Reading from the N-terminus, the 468-residue chain is Ribulose bisphosphate carboxylase large chain (468 aa).

The residue at position 7 (Lys7) is an N6,N6,N6-trimethyllysine. Substrate-binding residues include Asn116 and Thr166. Lys168 acts as the Proton acceptor in catalysis. Lys170 provides a ligand contact to substrate. Positions 194, 196, and 197 each coordinate Mg(2+). Lys194 is modified (N6-carboxylysine). The active-site Proton acceptor is His287. The substrate site is built by Arg288, His320, and Ser372.

The protein belongs to the RuBisCO large chain family. Type I subfamily. In terms of assembly, heterohexadecamer of 8 large chains and 8 small chains; disulfide-linked. The disulfide link is formed within the large subunit homodimers. Requires Mg(2+) as cofactor. The disulfide bond which can form in the large chain dimeric partners within the hexadecamer appears to be associated with oxidative stress and protein turnover.

It is found in the plastid. It localises to the chloroplast. It catalyses the reaction 2 (2R)-3-phosphoglycerate + 2 H(+) = D-ribulose 1,5-bisphosphate + CO2 + H2O. The enzyme catalyses D-ribulose 1,5-bisphosphate + O2 = 2-phosphoglycolate + (2R)-3-phosphoglycerate + 2 H(+). Functionally, ruBisCO catalyzes two reactions: the carboxylation of D-ribulose 1,5-bisphosphate, the primary event in carbon dioxide fixation, as well as the oxidative fragmentation of the pentose substrate in the photorespiration process. Both reactions occur simultaneously and in competition at the same active site. This Cornus alternifolia (Pagoda dogwood) protein is Ribulose bisphosphate carboxylase large chain.